Reading from the N-terminus, the 126-residue chain is 13 kDa ribonucleoprotein-associated protein (126 aa).

It belongs to the eukaryotic ribosomal protein eL8 family. Component of the U3 snoRNP particle. Binds to the C'/D and B/C motifs in U3 snoRNA. Component of the 25S U4/U6.U5 tri-snRNP particle, a subcomplex of the spliceosome. Binds to the 5' stem-loop of U4 snRNA.

The protein resides in the nucleus. It is found in the nucleolus. In terms of biological role, common component of the spliceosome and rRNA processing machinery. In association with the spliceosomal U4/U6.U5 tri-snRNP particle, required for splicing of pre-mRNA. In association with box C/D snoRNPs, required for processing of pre-ribosomal RNA (rRNA) and site-specific 2'-O-methylation of substrate RNAs. Essential for the accumulation and stability of U4 snRNA, U6 snRNA, and box C/D snoRNAs. The sequence is that of 13 kDa ribonucleoprotein-associated protein (SNU13) from Mycosarcoma maydis (Corn smut fungus).